The following is a 135-amino-acid chain: Galectin-1 (135 aa).

A2 carries the post-translational modification N-acetylalanine. The region spanning 4–135 is the Galectin domain; the sequence is GLVASNLNLK…DFKIKCVAFE (132 aa). N6-acetyllysine occurs at positions 13, 19, and 29. S30 carries the phosphoserine modification. A beta-D-galactoside-binding positions include 45–49, H53, N62, and 69–72; these read HFNPR and WGTE. At K108 the chain carries N6-acetyllysine; alternate. K108 is subject to N6-succinyllysine; alternate. An N6-acetyllysine modification is found at K128.

In terms of assembly, binds LGALS3BP. Interacts with CD2, CD3, CD4, CD6, CD7, CD43, ALCAM and CD45. Interacts with laminin. Interacts with SUSD2. Exists in a reversible and active monomer-homodimer equilibrium, the mononomer/dimer state is regulated by lectin concentration. Interacts with cargo receptor TMED10; the interaction mediates the translocation from the cytoplasm into the ERGIC (endoplasmic reticulum-Golgi intermediate compartment) and thereby secretion.

The protein resides in the cytoplasm. Its subcellular location is the secreted. It localises to the extracellular space. It is found in the extracellular matrix. Lectin that binds beta-galactoside and a wide array of complex carbohydrates. Plays a role in regulating apoptosis, cell proliferation and cell differentiation. Inhibits CD45 protein phosphatase activity and therefore the dephosphorylation of Lyn kinase. Strong inducer of T-cell apoptosis. The sequence is that of Galectin-1 (LGALS1) from Cricetulus griseus (Chinese hamster).